A 433-amino-acid polypeptide reads, in one-letter code: Phosphomethylpyrimidine synthase 2 (433 aa).

Residues N66, M94, Y123, H162, 184 to 186 (SRG), 225 to 228 (DALR), and E264 each bind substrate. Position 268 (H268) interacts with Zn(2+). Y291 lines the substrate pocket. H332 is a binding site for Zn(2+). Residues C408, C411, and C415 each contribute to the [4Fe-4S] cluster site.

It belongs to the ThiC family. The cofactor is [4Fe-4S] cluster.

The catalysed reaction is 5-amino-1-(5-phospho-beta-D-ribosyl)imidazole + S-adenosyl-L-methionine = 4-amino-2-methyl-5-(phosphooxymethyl)pyrimidine + CO + 5'-deoxyadenosine + formate + L-methionine + 3 H(+). It participates in cofactor biosynthesis; thiamine diphosphate biosynthesis. Functionally, catalyzes the synthesis of the hydroxymethylpyrimidine phosphate (HMP-P) moiety of thiamine from aminoimidazole ribotide (AIR) in a radical S-adenosyl-L-methionine (SAM)-dependent reaction. The polypeptide is Phosphomethylpyrimidine synthase 2 (Saccharolobus solfataricus (strain ATCC 35092 / DSM 1617 / JCM 11322 / P2) (Sulfolobus solfataricus)).